We begin with the raw amino-acid sequence, 100 residues long: Urease subunit gamma (100 aa).

It belongs to the urease gamma subunit family. Heterotrimer of UreA (gamma), UreB (beta) and UreC (alpha) subunits. Three heterotrimers associate to form the active enzyme.

It localises to the cytoplasm. The enzyme catalyses urea + 2 H2O + H(+) = hydrogencarbonate + 2 NH4(+). It functions in the pathway nitrogen metabolism; urea degradation; CO(2) and NH(3) from urea (urease route): step 1/1. The polypeptide is Urease subunit gamma (Photorhabdus laumondii subsp. laumondii (strain DSM 15139 / CIP 105565 / TT01) (Photorhabdus luminescens subsp. laumondii)).